The sequence spans 112 residues: U-scoloptoxin(16)-Er5a (112 aa).

An N-terminal signal peptide occupies residues 1–26; the sequence is MNTVSVVQFLAVGCAVFVLYGRGVFA.

It belongs to the scoloptoxin-16 family. In terms of processing, contains 2 disulfide bonds. Expressed by the venom gland.

The protein resides in the secreted. In Ethmostigmus rubripes (Giant centipede), this protein is U-scoloptoxin(16)-Er5a.